We begin with the raw amino-acid sequence, 307 residues long: Aspartate carbamoyltransferase catalytic subunit (307 aa).

Carbamoyl phosphate-binding residues include arginine 55 and threonine 56. Lysine 85 serves as a coordination point for L-aspartate. Positions 106, 135, and 138 each coordinate carbamoyl phosphate. Residues arginine 168 and arginine 230 each contribute to the L-aspartate site. 2 residues coordinate carbamoyl phosphate: leucine 268 and proline 269.

This sequence belongs to the aspartate/ornithine carbamoyltransferase superfamily. ATCase family. As to quaternary structure, heterododecamer (2C3:3R2) of six catalytic PyrB chains organized as two trimers (C3), and six regulatory PyrI chains organized as three dimers (R2).

It carries out the reaction carbamoyl phosphate + L-aspartate = N-carbamoyl-L-aspartate + phosphate + H(+). The protein operates within pyrimidine metabolism; UMP biosynthesis via de novo pathway; (S)-dihydroorotate from bicarbonate: step 2/3. In terms of biological role, catalyzes the condensation of carbamoyl phosphate and aspartate to form carbamoyl aspartate and inorganic phosphate, the committed step in the de novo pyrimidine nucleotide biosynthesis pathway. The chain is Aspartate carbamoyltransferase catalytic subunit from Photorhabdus laumondii subsp. laumondii (strain DSM 15139 / CIP 105565 / TT01) (Photorhabdus luminescens subsp. laumondii).